The primary structure comprises 212 residues: Pyridoxine/pyridoxamine 5'-phosphate oxidase (212 aa).

Substrate-binding positions include 8-11 (RREY) and lysine 66. FMN contacts are provided by residues 61 to 66 (RIVLLK), 76 to 77 (FT), arginine 82, lysine 83, and glutamine 105. Substrate contacts are provided by tyrosine 123, arginine 127, and serine 131. Residues 140–141 (QS) and tryptophan 185 contribute to the FMN site. Residue 191-193 (RLH) participates in substrate binding. Arginine 195 is a binding site for FMN.

The protein belongs to the pyridoxamine 5'-phosphate oxidase family. Homodimer. Requires FMN as cofactor.

It catalyses the reaction pyridoxamine 5'-phosphate + O2 + H2O = pyridoxal 5'-phosphate + H2O2 + NH4(+). The catalysed reaction is pyridoxine 5'-phosphate + O2 = pyridoxal 5'-phosphate + H2O2. It functions in the pathway cofactor metabolism; pyridoxal 5'-phosphate salvage; pyridoxal 5'-phosphate from pyridoxamine 5'-phosphate: step 1/1. Its pathway is cofactor metabolism; pyridoxal 5'-phosphate salvage; pyridoxal 5'-phosphate from pyridoxine 5'-phosphate: step 1/1. Catalyzes the oxidation of either pyridoxine 5'-phosphate (PNP) or pyridoxamine 5'-phosphate (PMP) into pyridoxal 5'-phosphate (PLP). This chain is Pyridoxine/pyridoxamine 5'-phosphate oxidase, found in Shewanella denitrificans (strain OS217 / ATCC BAA-1090 / DSM 15013).